We begin with the raw amino-acid sequence, 158 residues long: MNKLTHFDDSGQAHMVNVGDKPATHRIAIATGKITMLLETFKMVETGNHKKGDVLGIARIAGIQASKRTADLIPLCHPLALTHVSLEFRLDSTTSTISCKVRAETTGPTGVEMEALTAVQVALLTIYDMCKAVDRGMVMGDIKLLEKSGGKSGEWKLA.

Substrate is bound by residues 75–77 (LCH) and 113–114 (ME). Aspartate 128 is a catalytic residue.

It belongs to the MoaC family. Homohexamer; trimer of dimers.

It carries out the reaction (8S)-3',8-cyclo-7,8-dihydroguanosine 5'-triphosphate = cyclic pyranopterin phosphate + diphosphate. The protein operates within cofactor biosynthesis; molybdopterin biosynthesis. In terms of biological role, catalyzes the conversion of (8S)-3',8-cyclo-7,8-dihydroguanosine 5'-triphosphate to cyclic pyranopterin monophosphate (cPMP). This Polynucleobacter asymbioticus (strain DSM 18221 / CIP 109841 / QLW-P1DMWA-1) (Polynucleobacter necessarius subsp. asymbioticus) protein is Cyclic pyranopterin monophosphate synthase.